Consider the following 41-residue polypeptide: Diuretic hormone 1 (41 aa).

An Isoleucine amide modification is found at Ile-41.

The protein resides in the secreted. Its function is as follows. Regulation of fluid secretion. May stimulate primary urine secretion by Malpighian tubules and causes a dose-dependent stimulation of cAMP levels in the tubules. This is Diuretic hormone 1 from Hyles lineata (White-lined sphinx moth).